Consider the following 120-residue polypeptide: Succinate dehydrogenase membrane anchor subunit (120 aa).

Over 1–17 (MTEKLLHFIRTKSGSMH) the chain is Mitochondrial matrix. Residues 18-38 (WWLQRFLAILLAPIILYLLFD) traverse the membrane as a helical segment. Topologically, residues 39–63 (VAIYIGQQSDPTVMMFLNRIFNHNS) are mitochondrial intermembrane. A helical transmembrane segment spans residues 64–85 (IFIFITSVILIWHVRGGMEVII). Residue His-76 participates in heme binding. The Mitochondrial matrix portion of the chain corresponds to 86-95 (EDYVHGEKTR). A ubiquinone is bound at residue Tyr-88. Residues 96 to 120 (IVSIFLIRVIAIEIMEYLYKCSIIF) traverse the membrane as a helical segment.

In terms of assembly, part of an enzyme complex containing four subunits: a flavoprotein, an iron-sulfur protein, plus two membrane-anchoring proteins. It depends on heme as a cofactor.

It is found in the mitochondrion inner membrane. Its pathway is carbohydrate metabolism; tricarboxylic acid cycle. In terms of biological role, membrane-anchoring subunit of succinate dehydrogenase (SDH). The sequence is that of Succinate dehydrogenase membrane anchor subunit (SDH4) from Reclinomonas americana.